An 82-amino-acid chain; its full sequence is Putative membrane protein insertion efficiency factor (82 aa).

It belongs to the UPF0161 family.

Its subcellular location is the cell inner membrane. In terms of biological role, could be involved in insertion of integral membrane proteins into the membrane. This chain is Putative membrane protein insertion efficiency factor, found in Rickettsia rickettsii (strain Iowa).